A 392-amino-acid chain; its full sequence is Caveolae-associated protein 1 (392 aa).

An N-acetylmethionine modification is found at methionine 1. The span at methionine 1–glutamate 10 shows a compositional bias: basic and acidic residues. Residues methionine 1–leucine 45 are disordered. Residues methionine 1–lysine 100 form a required for homotrimerization and for interaction with CAVIN2 and CAVIN3 region. Serine 21 and serine 38 each carry phosphoserine. The residue at position 40 (threonine 40) is a Phosphothreonine. Phosphoserine occurs at positions 42 and 48. The segment at valine 54–isoleucine 64 is nuclear export signal. The leucine-zipper 1 stretch occupies residues leucine 55–leucine 77. Lysine 118 participates in a covalent cross-link: Glycyl lysine isopeptide (Lys-Gly) (interchain with G-Cter in SUMO2). At serine 120 the chain carries Phosphoserine. Lysine 124 is covalently cross-linked (Glycyl lysine isopeptide (Lys-Gly) (interchain with G-Cter in SUMO2)). Positions lysine 138 to lysine 154 are nuclear localization signal. Tyrosine 158 carries the post-translational modification Phosphotyrosine. A Glycyl lysine isopeptide (Lys-Gly) (interchain with G-Cter in SUMO1); alternate cross-link involves residue lysine 163. Residue lysine 163 forms a Glycyl lysine isopeptide (Lys-Gly) (interchain with G-Cter in SUMO2); alternate linkage. A Glycyl lysine isopeptide (Lys-Gly) (interchain with G-Cter in SUMO2) cross-link involves residue lysine 167. Residues leucine 168–leucine 188 are leucine-zipper 2. Phosphoserine occurs at positions 169 and 171. A Glycyl lysine isopeptide (Lys-Gly) (interchain with G-Cter in SUMO2) cross-link involves residue lysine 172. Phosphoserine occurs at positions 173 and 177. Over residues serine 173–lysine 183 the composition is skewed to basic and acidic residues. The interval serine 173–alanine 198 is disordered. A compositionally biased stretch (acidic residues) spans glutamate 184–alanine 198. A coiled-coil region spans residues isoleucine 201–valine 284. Phosphoserine is present on residues serine 204 and serine 205. A nuclear localization signal region spans residues lysine 235–arginine 251. The leucine-zipper 3 stretch occupies residues leucine 259–leucine 299. Serine 302 bears the Phosphoserine mark. Threonine 304 is modified (phosphothreonine). Phosphotyrosine is present on tyrosine 310. Residue lysine 328 forms a Glycyl lysine isopeptide (Lys-Gly) (interchain with G-Cter in SUMO2) linkage. Positions glycine 347 to serine 367 are disordered. Residues glycine 354–leucine 363 are compositionally biased toward basic and acidic residues. Phosphoserine is present on residues serine 367, serine 368, serine 381, serine 389, and serine 391.

It belongs to the CAVIN family. Component of the CAVIN complex composed of CAVIN1, CAVIN2, CAVIN3 and CAVIN4. Interacts with RNA polymerase I subunit POLR1A/RPA1 and TTF1. Binds the 3' end of pre-rRNA. Interacts with transcription factor ZNF148. Interacts with LIPE in the adipocyte cytoplasm. Interacts with CAV1, CAV3, CAVIN2, CAVIN3 and CAVIN4. Phosphorylated. Present in active and inactive forms. Changes in phosphorylation pattern may alter activity. Phosphorylation at Tyr-158 is essential for its function in the regulation of ribosomal transcriptional activity. Post-translationally, monoubiquitinated. In terms of tissue distribution, expressed in the adipocyte (at protein level). Expressed in all striated and smooth muscles tested including diaphragm, esophageal striated muscle, fibroblast, endocardial endothelium, epicardial mesothelium, intestinal smooth muscle, masseter, soleus muscle, vascular smooth muscle and white gastrocnemius muscle (at protein level). Expressed in the endothelium and perineural sheath (at protein level). Not expressed in hepatocytes.

It localises to the membrane. The protein localises to the caveola. The protein resides in the cell membrane. It is found in the microsome. Its subcellular location is the endoplasmic reticulum. It localises to the cytoplasm. The protein localises to the cytosol. The protein resides in the mitochondrion. It is found in the nucleus. In terms of biological role, plays an important role in caveolae formation and organization. Essential for the formation of caveolae in all tissues. Core component of the CAVIN complex which is essential for recruitment of the complex to the caveolae in presence of calveolin-1 (CAV1). Essential for normal oligomerization of CAV1. Promotes ribosomal transcriptional activity in response to metabolic challenges in the adipocytes and plays an important role in the formation of the ribosomal transcriptional loop. Dissociates transcription complexes paused by DNA-bound TTF1, thereby releasing both RNA polymerase I and pre-RNA from the template. The caveolae biogenesis pathway is required for the secretion of proteins such as GASK1A. The protein is Caveolae-associated protein 1 of Rattus norvegicus (Rat).